An 83-amino-acid polypeptide reads, in one-letter code: Small proline-rich protein 2A3 (83 aa).

Tandem repeats lie at residues 21–29, 30–38, 39–47, 48–56, and 57–65. Residues 21 to 65 are 5 X 9 AA approximate tandem repeats; sequence PKCPEPCPPQVWPGPCRPVMCFEPCLPSVWPGPCRPVVCYEQCPP.

This sequence belongs to the cornifin (SPRR) family. Post-translationally, forms five pairs of intrachain disulfide bonds.

Its subcellular location is the secreted. It localises to the extracellular space. The protein resides in the cytoplasmic vesicle. It is found in the secretory vesicle. Its function is as follows. Gut bactericidal protein that selectively kills Gram-positive bacteria by binding to negatively charged lipids on bacterial membranes, leading to bacterial membrane permeabilization and disruption. Specifically binds lipids bearing negatively charged headgroups, such as phosphatidic acid, phosphatidylserine (PS), cardiolipin (CL), and phosphatidylinositol phosphates, but not to zwitterionic or neutral lipids. Induced by type-2 cytokines in response to helminth infection and is required to protect against helminth-induced bacterial invasion of intestinal tissue. May also be involved in the development of the cornified envelope of squamous epithelia; however, additional evidences are required to confirm this result in vivo. In Mus musculus (Mouse), this protein is Small proline-rich protein 2A3.